A 255-amino-acid chain; its full sequence is Protein DOG1-like 2 (255 aa).

The DOG1 domain maps to 10 to 246 (EKLQKRCYHE…HDRGRVRADV (237 aa)).

This is Protein DOG1-like 2 from Arabidopsis thaliana (Mouse-ear cress).